A 287-amino-acid chain; its full sequence is Light-independent protochlorophyllide reductase iron-sulfur ATP-binding protein (287 aa).

ATP-binding positions include 10–15 and lysine 39; that span reads GIGKST. Serine 14 serves as a coordination point for Mg(2+). [4Fe-4S] cluster contacts are provided by cysteine 95 and cysteine 129. 180-181 is a binding site for ATP; that stretch reads NR.

This sequence belongs to the NifH/BchL/ChlL family. As to quaternary structure, homodimer. Protochlorophyllide reductase is composed of three subunits; ChlL, ChlN and ChlB. [4Fe-4S] cluster is required as a cofactor.

Its subcellular location is the plastid. The protein resides in the chloroplast. The catalysed reaction is chlorophyllide a + oxidized 2[4Fe-4S]-[ferredoxin] + 2 ADP + 2 phosphate = protochlorophyllide a + reduced 2[4Fe-4S]-[ferredoxin] + 2 ATP + 2 H2O. The protein operates within porphyrin-containing compound metabolism; chlorophyll biosynthesis (light-independent). Functionally, component of the dark-operative protochlorophyllide reductase (DPOR) that uses Mg-ATP and reduced ferredoxin to reduce ring D of protochlorophyllide (Pchlide) to form chlorophyllide a (Chlide). This reaction is light-independent. The L component serves as a unique electron donor to the NB-component of the complex, and binds Mg-ATP. This Nephroselmis olivacea (Green alga) protein is Light-independent protochlorophyllide reductase iron-sulfur ATP-binding protein.